A 648-amino-acid chain; its full sequence is Spike protein P3 (648 aa).

As to quaternary structure, interacts with P6.

The protein resides in the virion membrane. In terms of biological role, P3 protein is necessary for adsorption onto host cells. Attaches to a type IV pilus of the host. This chain is Spike protein P3 (P3), found in Pseudomonas savastanoi pv. phaseolicola (Pseudomonas syringae pv. phaseolicola).